The sequence spans 236 residues: 2-C-methyl-D-erythritol 4-phosphate cytidylyltransferase (236 aa).

The protein belongs to the IspD/TarI cytidylyltransferase family. IspD subfamily.

It catalyses the reaction 2-C-methyl-D-erythritol 4-phosphate + CTP + H(+) = 4-CDP-2-C-methyl-D-erythritol + diphosphate. Its pathway is isoprenoid biosynthesis; isopentenyl diphosphate biosynthesis via DXP pathway; isopentenyl diphosphate from 1-deoxy-D-xylulose 5-phosphate: step 2/6. Functionally, catalyzes the formation of 4-diphosphocytidyl-2-C-methyl-D-erythritol from CTP and 2-C-methyl-D-erythritol 4-phosphate (MEP). The polypeptide is 2-C-methyl-D-erythritol 4-phosphate cytidylyltransferase (Symbiobacterium thermophilum (strain DSM 24528 / JCM 14929 / IAM 14863 / T)).